Consider the following 199-residue polypeptide: MFQRFTSLFFSTPAPPEDSNCPGAFVSEEDEVDGWLIIDLQDSYTAPPDPRASPAPAGRPPPAPSLMDESWFVTPPACFTAEGPGLGPARLQSNPLEDLLIEHPSMSVYVTGSTIVLESGPPSPHPEAALPDQDLSDGELAPARREPRALHHAAAPMPARAVLLEKAGQVRRLQRARQRAERHTLSAKVLQRQNRARES.

An LIR motif is present at residues 26 to 41; sequence VSEEDEVDGWLIIDLQ. 3 disordered regions span residues 41–69, 117–153, and 173–199; these read QDSY…LMDE, LESG…LHHA, and LQRA…ARES. The segment covering 47–64 has biased composition (pro residues); sequence PPDPRASPAPAGRPPPAP. At Ser136 the chain carries Phosphoserine.

In terms of assembly, interacts with VMP1, GABARAP, GABARAPL1, GABARAPL2, MAP1LC3A, MAP1LC3B, MAP1LC3C and THRA. As to expression, abundantly expressed in skeletal muscle and heart and expression is highly repressed in muscle from obese diabetic rats.

Its subcellular location is the cytoplasm. The protein resides in the cytosol. It is found in the nucleus. It localises to the PML body. The protein localises to the cytoplasmic vesicle. Its subcellular location is the autophagosome. Its function is as follows. Dual regulator of transcription and autophagy. Positively regulates autophagy and is required for autophagosome formation and processing. May act as a scaffold protein that recruits MAP1LC3A, GABARAP and GABARAPL2 and brings them to the autophagosome membrane by interacting with VMP1 where, in cooperation with the BECN1-PI3-kinase class III complex, they trigger autophagosome development. Acts as a transcriptional activator of THRA. The protein is Tumor protein p53-inducible nuclear protein 2 (Tp53inp2) of Rattus norvegicus (Rat).